We begin with the raw amino-acid sequence, 71 residues long: Sec-independent protein translocase protein TatA (71 aa).

A helical transmembrane segment spans residues 1-21 (MGSFSIWHWLIVLVIVALIFG). The segment at 48–71 (ADKTEQVTQQQTTIDVQAKEKQNS) is disordered.

Belongs to the TatA/E family. The Tat system comprises two distinct complexes: a TatABC complex, containing multiple copies of TatA, TatB and TatC subunits, and a separate TatA complex, containing only TatA subunits. Substrates initially bind to the TatABC complex, which probably triggers association of the separate TatA complex to form the active translocon.

The protein resides in the cell inner membrane. Its function is as follows. Part of the twin-arginine translocation (Tat) system that transports large folded proteins containing a characteristic twin-arginine motif in their signal peptide across membranes. TatA could form the protein-conducting channel of the Tat system. The chain is Sec-independent protein translocase protein TatA from Bordetella avium (strain 197N).